We begin with the raw amino-acid sequence, 424 residues long: Riboflavin biosynthesis protein RibBA (424 aa).

The interval 1–204 is DHBP synthase; sequence MTRFDSIERA…IADLIAWRRK (204 aa). D-ribulose 5-phosphate is bound by residues 28–29, Asp-33, 141–145, and Glu-165; these read RE and RPGHT. Glu-29 provides a ligand contact to Mg(2+). His-144 is a Mg(2+) binding site. Residues 205–424 form a GTP cyclohydrolase II region; that stretch reads HEKHVLRIAE…QNTAQPGTAL (220 aa). 259–263 is a binding site for GTP; it reads RVHSE. Residues Cys-264, Cys-275, and Cys-277 each coordinate Zn(2+). Residues Gln-280, 303 to 305, and Thr-325 contribute to the GTP site; that span reads EGR. Asp-337 (proton acceptor; for GTP cyclohydrolase activity) is an active-site residue. The Nucleophile; for GTP cyclohydrolase activity role is filled by Arg-339. 2 residues coordinate GTP: Thr-360 and Lys-365.

In the N-terminal section; belongs to the DHBP synthase family. This sequence in the C-terminal section; belongs to the GTP cyclohydrolase II family. Mg(2+) is required as a cofactor. It depends on Mn(2+) as a cofactor. Requires Zn(2+) as cofactor.

It catalyses the reaction D-ribulose 5-phosphate = (2S)-2-hydroxy-3-oxobutyl phosphate + formate + H(+). The enzyme catalyses GTP + 4 H2O = 2,5-diamino-6-hydroxy-4-(5-phosphoribosylamino)-pyrimidine + formate + 2 phosphate + 3 H(+). It participates in cofactor biosynthesis; riboflavin biosynthesis; 2-hydroxy-3-oxobutyl phosphate from D-ribulose 5-phosphate: step 1/1. It functions in the pathway cofactor biosynthesis; riboflavin biosynthesis; 5-amino-6-(D-ribitylamino)uracil from GTP: step 1/4. Catalyzes the conversion of D-ribulose 5-phosphate to formate and 3,4-dihydroxy-2-butanone 4-phosphate. Functionally, catalyzes the conversion of GTP to 2,5-diamino-6-ribosylamino-4(3H)-pyrimidinone 5'-phosphate (DARP), formate and pyrophosphate. This is Riboflavin biosynthesis protein RibBA from Rhodococcus erythropolis (strain PR4 / NBRC 100887).